The following is a 218-amino-acid chain: Glutathione S-transferase Mu 1 (218 aa).

The region spanning 2-88 is the GST N-terminal domain; the sequence is PMILGYWDIR…YIARKHNLCG (87 aa). Residues 7 to 8, 43 to 46, Lys50, 59 to 60, and 72 to 73 contribute to the glutathione site; these read YW, RSQW, NL, and QS. In terms of domain architecture, GST C-terminal spans 90–208; sequence TEEEMIRVDI…KSSRFLPGPL (119 aa). Tyr116 provides a ligand contact to substrate.

Belongs to the GST superfamily. Mu family. In terms of assembly, homodimer.

It is found in the cytoplasm. It carries out the reaction RX + glutathione = an S-substituted glutathione + a halide anion + H(+). The catalysed reaction is prostaglandin A2 + glutathione = prostaglandin A2-S-(R)-glutathione. The enzyme catalyses prostaglandin J2 + glutathione = prostaglandin J2-S-(R)-glutathione. It catalyses the reaction prostaglandin J2 + glutathione = prostaglandin J2-S-(S)-glutathione. It carries out the reaction prostaglandin A2 + glutathione = prostaglandin A2-S-(S)-glutathione. The catalysed reaction is 11(S)-hydroxy-14(S),15(S)-epoxy-(5Z,8Z,12E)-eicosatrienoate + glutathione = (11S,15S)-dihydroxy-14(R)-S-glutathionyl-(5Z,8Z,12E)-eicosatrienoate. Its function is as follows. Conjugation of reduced glutathione to a wide number of exogenous and endogenous hydrophobic electrophiles. Protects against the thiol-mediated metal-catalyzed oxidative inactivation of enzymes. Involved in the formation of glutathione conjugates of both prostaglandin A2 (PGA2) and prostaglandin J2 (PGJ2). Participates in the formation of novel hepoxilin regioisomers. This Bos taurus (Bovine) protein is Glutathione S-transferase Mu 1 (GSTM1).